A 296-amino-acid chain; its full sequence is 4-hydroxy-tetrahydrodipicolinate synthase (296 aa).

T49 is a binding site for pyruvate. Y137 acts as the Proton donor/acceptor in catalysis. Catalysis depends on K166, which acts as the Schiff-base intermediate with substrate. Pyruvate is bound at residue I208.

This sequence belongs to the DapA family. As to quaternary structure, homotetramer; dimer of dimers.

It localises to the cytoplasm. The catalysed reaction is L-aspartate 4-semialdehyde + pyruvate = (2S,4S)-4-hydroxy-2,3,4,5-tetrahydrodipicolinate + H2O + H(+). Its pathway is amino-acid biosynthesis; L-lysine biosynthesis via DAP pathway; (S)-tetrahydrodipicolinate from L-aspartate: step 3/4. Functionally, catalyzes the condensation of (S)-aspartate-beta-semialdehyde [(S)-ASA] and pyruvate to 4-hydroxy-tetrahydrodipicolinate (HTPA). In Chlorobium limicola (strain DSM 245 / NBRC 103803 / 6330), this protein is 4-hydroxy-tetrahydrodipicolinate synthase.